Reading from the N-terminus, the 344-residue chain is Phenylalanine--tRNA ligase alpha subunit (344 aa).

Glu256 contacts Mg(2+).

The protein belongs to the class-II aminoacyl-tRNA synthetase family. Phe-tRNA synthetase alpha subunit type 1 subfamily. As to quaternary structure, tetramer of two alpha and two beta subunits. Mg(2+) serves as cofactor.

The protein resides in the cytoplasm. The enzyme catalyses tRNA(Phe) + L-phenylalanine + ATP = L-phenylalanyl-tRNA(Phe) + AMP + diphosphate + H(+). In Oceanobacillus iheyensis (strain DSM 14371 / CIP 107618 / JCM 11309 / KCTC 3954 / HTE831), this protein is Phenylalanine--tRNA ligase alpha subunit.